The following is a 552-amino-acid chain: Chaperonin GroEL (552 aa).

ATP-binding positions include 30-33 (TLGP), Lys-51, 87-91 (DGTTT), Gly-415, 479-481 (NAA), and Asp-495.

Belongs to the chaperonin (HSP60) family. In terms of assembly, forms a cylinder of 14 subunits composed of two heptameric rings stacked back-to-back. Interacts with the co-chaperonin GroES.

It localises to the cytoplasm. It carries out the reaction ATP + H2O + a folded polypeptide = ADP + phosphate + an unfolded polypeptide.. In terms of biological role, together with its co-chaperonin GroES, plays an essential role in assisting protein folding. The GroEL-GroES system forms a nano-cage that allows encapsulation of the non-native substrate proteins and provides a physical environment optimized to promote and accelerate protein folding. This Nitrosospira multiformis (strain ATCC 25196 / NCIMB 11849 / C 71) protein is Chaperonin GroEL.